A 125-amino-acid polypeptide reads, in one-letter code: MAISKEDVLEYISNLSVLELSELVKEFEEKFGVSAAPVMVAGGAVAGGAVAAAEEKTEFDIVLTDGGAKKIEVIKIVRALTGLGLKEAKDAVEQTPSTLKEGVAKAEAEEAKKQLEEAGAKVELK.

This sequence belongs to the bacterial ribosomal protein bL12 family. As to quaternary structure, homodimer. Part of the ribosomal stalk of the 50S ribosomal subunit. Forms a multimeric L10(L12)X complex, where L10 forms an elongated spine to which 2 to 4 L12 dimers bind in a sequential fashion. Binds GTP-bound translation factors.

Functionally, forms part of the ribosomal stalk which helps the ribosome interact with GTP-bound translation factors. Is thus essential for accurate translation. This chain is Large ribosomal subunit protein bL12, found in Campylobacter jejuni subsp. jejuni serotype O:2 (strain ATCC 700819 / NCTC 11168).